Here is a 136-residue protein sequence, read N- to C-terminus: Protein NrdI (136 aa).

This sequence belongs to the NrdI family.

In terms of biological role, probably involved in ribonucleotide reductase function. The polypeptide is Protein NrdI (Shigella boydii serotype 4 (strain Sb227)).